The primary structure comprises 155 residues: Large ribosomal subunit protein uL22c (155 aa).

It belongs to the universal ribosomal protein uL22 family. Part of the 50S ribosomal subunit.

It is found in the plastid. The protein localises to the chloroplast. Functionally, this protein binds specifically to 23S rRNA. The globular domain of the protein is located near the polypeptide exit tunnel on the outside of the subunit, while an extended beta-hairpin is found that lines the wall of the exit tunnel in the center of the 70S ribosome. The chain is Large ribosomal subunit protein uL22c (rpl22) from Coffea arabica (Arabian coffee).